Consider the following 37-residue polypeptide: Cytochrome b6-f complex subunit 5 (37 aa).

A helical membrane pass occupies residues 5–25 (LLSGIVLGLVPVTIAGLFVTA).

The protein belongs to the PetG family. In terms of assembly, the 4 large subunits of the cytochrome b6-f complex are cytochrome b6, subunit IV (17 kDa polypeptide, PetD), cytochrome f and the Rieske protein, while the 4 small subunits are PetG, PetL, PetM and PetN. The complex functions as a dimer.

It localises to the plastid. The protein resides in the chloroplast thylakoid membrane. Functionally, component of the cytochrome b6-f complex, which mediates electron transfer between photosystem II (PSII) and photosystem I (PSI), cyclic electron flow around PSI, and state transitions. PetG is required for either the stability or assembly of the cytochrome b6-f complex. The polypeptide is Cytochrome b6-f complex subunit 5 (Chlamydomonas moewusii (Chlamydomonas eugametos)).